The sequence spans 206 residues: Ribosomal RNA large subunit methyltransferase E (206 aa).

Positions 60, 62, 80, 96, and 121 each coordinate S-adenosyl-L-methionine. Lys161 (proton acceptor) is an active-site residue.

The protein belongs to the class I-like SAM-binding methyltransferase superfamily. RNA methyltransferase RlmE family.

It localises to the cytoplasm. The catalysed reaction is uridine(2552) in 23S rRNA + S-adenosyl-L-methionine = 2'-O-methyluridine(2552) in 23S rRNA + S-adenosyl-L-homocysteine + H(+). Its function is as follows. Specifically methylates the uridine in position 2552 of 23S rRNA at the 2'-O position of the ribose in the fully assembled 50S ribosomal subunit. The chain is Ribosomal RNA large subunit methyltransferase E from Francisella tularensis subsp. novicida (strain U112).